The sequence spans 460 residues: MAAPEDVAALQAEITRREEELASLKRRLAAALTAEPEPERPLRVPPPPLAPRAALSRDEILRYSRQLLLPELGVRGQLRLAAAAVLVVGCGGLGCPLAQYLAAAGVGRLGLVDHDVVETSNLARQVLHGEAQAGESKARSAAAALRRLNSAVECVAYPRALAEDWALDLVRGYDVVADCCDNVPTRYLVNDACVLAGRPLVSASALRFEGQMTVYHHDGGPCYRCVFPRPPPPETVTNCADGGVLGAVPGVLGCAQALEVLKIAAGLGSSYSGSMLLFDGLGGHFRRIRLRRRRPDCVVCGQQPTVTRLQDYEAFCGSSATDKCRALKLLCPEERISVTDYKRLLDSGAPHVLLDVRPQVEVDICRLPHSLHIPLSQLERRDADSLKLLGAALRKGKQESQEGVALPVYVICKLGNDSQKAVKVLQSLTAVPELDSLTVQDIVGGLMAWAAKIDGTFPQY.

ATP is bound by residues glycine 92, aspartate 113, 120–124 (SNLAR), lysine 137, and 181–182 (DN). Positions 158–238 (PRALAEDWAL…RPPPPETVTN (81 aa)) are interaction with NFS1. Cysteine 222 and cysteine 225 together coordinate Zn(2+). Cysteine 239 functions as the Glycyl thioester intermediate; for adenylyltransferase activity in the catalytic mechanism. Zn(2+) contacts are provided by cysteine 297 and cysteine 300. The cysteines at positions 316 and 324 are disulfide-linked. The region spanning 347 to 458 (SGAPHVLLDV…WAAKIDGTFP (112 aa)) is the Rhodanese domain. Residue cysteine 412 is the Cysteine persulfide intermediate; for sulfurtransferase activity of the active site. A Cysteine persulfide modification is found at cysteine 412.

This sequence in the N-terminal section; belongs to the HesA/MoeB/ThiF family. UBA4 subfamily. As to quaternary structure, interacts with NFS1. Requires Zn(2+) as cofactor.

It localises to the cytoplasm. It is found in the cytosol. The catalysed reaction is [molybdopterin-synthase sulfur-carrier protein]-C-terminal Gly-Gly + ATP + H(+) = [molybdopterin-synthase sulfur-carrier protein]-C-terminal Gly-Gly-AMP + diphosphate. The enzyme catalyses [molybdopterin-synthase sulfur-carrier protein]-C-terminal Gly-Gly-AMP + S-sulfanyl-L-cysteinyl-[cysteine desulfurase] + AH2 = [molybdopterin-synthase sulfur-carrier protein]-C-terminal-Gly-aminoethanethioate + L-cysteinyl-[cysteine desulfurase] + A + AMP + 2 H(+). The protein operates within tRNA modification; 5-methoxycarbonylmethyl-2-thiouridine-tRNA biosynthesis. It functions in the pathway cofactor biosynthesis; molybdopterin biosynthesis. In terms of biological role, plays a central role in 2-thiolation of mcm(5)S(2)U at tRNA wobble positions of cytosolic tRNA(Lys), tRNA(Glu) and tRNA(Gln). Also essential during biosynthesis of the molybdenum cofactor. Acts by mediating the C-terminal thiocarboxylation of sulfur carriers URM1 and MOCS2A. Its N-terminus first activates URM1 and MOCS2A as acyl-adenylates (-COAMP), then the persulfide sulfur on the catalytic cysteine is transferred to URM1 and MOCS2A to form thiocarboxylation (-COSH) of their C-terminus. The reaction probably involves hydrogen sulfide that is generated from the persulfide intermediate and that acts as a nucleophile towards URM1 and MOCS2A. Subsequently, a transient disulfide bond is formed. Does not use thiosulfate as sulfur donor; NFS1 acting as a sulfur donor for thiocarboxylation reactions. The protein is Adenylyltransferase and sulfurtransferase MOCS3 (Mocs3) of Mus musculus (Mouse).